Reading from the N-terminus, the 394-residue chain is Flap endonuclease 1 (394 aa).

The N-domain stretch occupies residues methionine 1–lysine 104. Residue aspartate 34 coordinates Mg(2+). DNA-binding residues include arginine 47 and arginine 70. Mg(2+) contacts are provided by aspartate 86, glutamate 158, glutamate 160, aspartate 179, and aspartate 181. The I-domain stretch occupies residues aspartate 122 to histidine 253. Glutamate 158 is a binding site for DNA. Positions 231 and 233 each coordinate DNA. Aspartate 233 is a Mg(2+) binding site. The interaction with PCNA stretch occupies residues glutamine 341–phenylalanine 349. The segment covering glutamate 356 to glutamate 383 has biased composition (basic and acidic residues). Residues glutamate 356–alanine 394 form a disordered region. Residues lysine 384–alanine 394 show a composition bias toward basic residues.

It belongs to the XPG/RAD2 endonuclease family. FEN1 subfamily. Interacts with PCNA. Three molecules of FEN1 bind to one PCNA trimer with each molecule binding to one PCNA monomer. PCNA stimulates the nuclease activity without altering cleavage specificity. It depends on Mg(2+) as a cofactor. Post-translationally, phosphorylated. Phosphorylation upon DNA damage induces relocalization to the nuclear plasma.

The protein resides in the nucleus. It is found in the nucleolus. Its subcellular location is the nucleoplasm. It localises to the mitochondrion. In terms of biological role, structure-specific nuclease with 5'-flap endonuclease and 5'-3' exonuclease activities involved in DNA replication and repair. During DNA replication, cleaves the 5'-overhanging flap structure that is generated by displacement synthesis when DNA polymerase encounters the 5'-end of a downstream Okazaki fragment. It enters the flap from the 5'-end and then tracks to cleave the flap base, leaving a nick for ligation. Also involved in the long patch base excision repair (LP-BER) pathway, by cleaving within the apurinic/apyrimidinic (AP) site-terminated flap. Acts as a genome stabilization factor that prevents flaps from equilibrating into structures that lead to duplications and deletions. Also possesses 5'-3' exonuclease activity on nicked or gapped double-stranded DNA, and exhibits RNase H activity. Also involved in replication and repair of rDNA and in repairing mitochondrial DNA. The sequence is that of Flap endonuclease 1 from Sordaria macrospora (strain ATCC MYA-333 / DSM 997 / K(L3346) / K-hell).